The sequence spans 279 residues: Oxygen-dependent coproporphyrinogen-III oxidase (279 aa).

Residue serine 102 participates in substrate binding. A divalent metal cation is bound by residues histidine 106 and histidine 116. The active-site Proton donor is histidine 116. Position 118-120 (118-120) interacts with substrate; sequence NTR. Histidine 149 and histidine 179 together coordinate a divalent metal cation. The interval 244-279 is important for dimerization; that stretch reads YVEFNLLYDRGTKFGLMTDGNVEAILMSLPPEVKFN.

This sequence belongs to the aerobic coproporphyrinogen-III oxidase family. Homodimer. A divalent metal cation serves as cofactor.

It localises to the cytoplasm. It carries out the reaction coproporphyrinogen III + O2 + 2 H(+) = protoporphyrinogen IX + 2 CO2 + 2 H2O. Its pathway is porphyrin-containing compound metabolism; protoporphyrin-IX biosynthesis; protoporphyrinogen-IX from coproporphyrinogen-III (O2 route): step 1/1. Involved in the heme biosynthesis. Catalyzes the aerobic oxidative decarboxylation of propionate groups of rings A and B of coproporphyrinogen-III to yield the vinyl groups in protoporphyrinogen-IX. The polypeptide is Oxygen-dependent coproporphyrinogen-III oxidase (Rickettsia rickettsii (strain Iowa)).